Consider the following 306-residue polypeptide: Palmitoyl-protein thioesterase 1 (306 aa).

A signal peptide spans 1–27 (MASPGCLWLLAVALLPWTCASRALQHL). A lipid anchor (S-palmitoyl cysteine; by ZDHHC3 and ZDHHC7) is attached at Cys-6. Cystine bridges form between Cys-45/Cys-46, Cys-96/Cys-128, and Cys-152/Cys-160. Ser-115 is a catalytic residue. N-linked (GlcNAc...) asparagine glycosylation is found at Asn-197, Asn-212, and Asn-232. Catalysis depends on residues Asp-233 and His-289.

Belongs to the palmitoyl-protein thioesterase family. As to quaternary structure, interacts with CLN5. Interacts with ATP5F1A and ATP5F1B. In terms of processing, glycosylated.

It localises to the lysosome. Its subcellular location is the secreted. The protein resides in the golgi apparatus. The protein localises to the endoplasmic reticulum. The enzyme catalyses S-hexadecanoyl-L-cysteinyl-[protein] + H2O = L-cysteinyl-[protein] + hexadecanoate + H(+). It catalyses the reaction hexadecanoyl-CoA + H2O = hexadecanoate + CoA + H(+). It carries out the reaction S-hexadecanoyl-N-acetylcysteamine + H2O = N-acetylcysteamine + hexadecanoate + H(+). The catalysed reaction is S-hexadecanoyl-N-acetylcysteine methyl ester + H2O = N-acetylcysteine methyl ester + hexadecanoate + H(+). Its activity is regulated as follows. Palmitoylation reduces PPT1 enzymatic activity. Its function is as follows. Has thioesterase activity against fatty acid thioesters with 14 -18 carbons, including palmitoyl-CoA, S-palmitoyl-N-acetylcysteamine, and palmitoylated proteins. In contrast to PPT2, PPT1 can hydrolyze palmitoylated proteins and palmitoylcysteine. This is Palmitoyl-protein thioesterase 1 (PPT1) from Homo sapiens (Human).